Here is a 360-residue protein sequence, read N- to C-terminus: Mitogen-activated protein kinase 1 (360 aa).

N-acetylalanine is present on Ala2. The 289-residue stretch at 25–313 folds into the Protein kinase domain; that stretch reads YTNLSYIGEG…VEQALAHPYL (289 aa). Ser29 carries the phosphoserine; by SGK1 modification. Residues 31-39 and Lys54 each bind ATP; that span reads IGEGAYGMV. Catalysis depends on Asp149, which acts as the Proton acceptor. Thr185 carries the phosphothreonine; by MAP2K1 and MAP2K2 modification. A TXY motif is present at residues 185–187; sequence TEY. Tyr187 is subject to Phosphotyrosine; by MAP2K1 and MAP2K2. A Phosphothreonine; by autocatalysis modification is found at Thr190. Phosphoserine occurs at positions 246, 248, and 284.

The protein belongs to the protein kinase superfamily. CMGC Ser/Thr protein kinase family. MAP kinase subfamily. Binds both upstream activators and downstream substrates in multimolecular complexes. Interacts with ADAM15, ARHGEF2, ARRB2, DAPK1 (via death domain), HSF4, IER3, IPO7, MKNK2, MORG1, NISCH, PEA15, SGK1, and isoform 1 of NEK2. Interacts (via phosphorylated form) with TPR (via C-terminal region and phosphorylated form); the interaction requires dimerization of MAPK1/ERK2 and increases following EGF stimulation. Interacts with MAP2K1. Interacts with DUSP6. Interacts (phosphorylated form) with CAV2 ('Tyr-19'-phosphorylated form); the interaction, promoted by insulin, leads to nuclear location and MAPK1 activation. MKNK2 isoform 1 binding prevents from dephosphorylation and inactivation. Interacts with DCC. The phosphorylated form interacts with PML. Interacts with STYX. Interacts with CDK2AP2. Interacts with CAVIN4. Interacts with DUSP7; the interaction enhances DUSP7 phosphatase activity. Interacts with GIT1; this interaction is necessary for MAPK1 localization to focal adhesions. Interacts with ZNF263. Interacts with phosphoglycerate kinase PGK1; the interaction is direct, occurs under hypoxic conditions, and promotes interaction between PGK1 and PIN1. It depends on Mg(2+) as a cofactor. In terms of processing, dually phosphorylated on Thr-185 and Tyr-187, which activates the enzyme. Phosphorylated upon FLT3 and KIT signaling. Phosphorylation on Ser-29 by SGK1 results in its activation by enhancing its interaction with MAP2K1/MEK1 and MAP2K2/MEK2. Phosphorylation at Ser-246 and Ser-248 as well as autophosphorylation at Thr-190 promote nuclear localization. Ligand-activated ALK induces tyrosine phosphorylation. Dephosphorylated by PTPRJ at Tyr-187. Dephosphorylated by DUSP1 and DUSP2 at Thr-185 and Tyr-187. ISGylated. Post-translationally, ubiquitinated by TRIM15 via 'Lys-63'-linked ubiquitination; leading to activation. Deubiquitinated by CYLD.

It is found in the nucleus. It localises to the cytoplasm. The protein localises to the cytoskeleton. Its subcellular location is the microtubule organizing center. The protein resides in the centrosome. It is found in the spindle. It localises to the membrane. The protein localises to the caveola. Its subcellular location is the cell junction. The protein resides in the focal adhesion. The enzyme catalyses L-seryl-[protein] + ATP = O-phospho-L-seryl-[protein] + ADP + H(+). It carries out the reaction L-threonyl-[protein] + ATP = O-phospho-L-threonyl-[protein] + ADP + H(+). Its activity is regulated as follows. Phosphorylated by MAP2K1/MEK1 and MAP2K2/MEK2 on Thr-185 and Tyr-187 in response to external stimuli like insulin or NGF. Both phosphorylations are required for activity. This phosphorylation causes dramatic conformational changes, which enable full activation and interaction of MAPK1/ERK2 with its substrates. Phosphorylation on Ser-29 by SGK1 results in its activation by enhancing its interaction with MAP2K1/MEK1 and MAP2K2/MEK2. Dephosphorylated and inactivated by DUSP1, DUSP3, DUSP6 and DUSP9. Inactivated by pyrimidylpyrrole inhibitors. In terms of biological role, serine/threonine kinase which acts as an essential component of the MAP kinase signal transduction pathway. MAPK1/ERK2 and MAPK3/ERK1 are the 2 MAPKs which play an important role in the MAPK/ERK cascade. They participate also in a signaling cascade initiated by activated KIT and KITLG/SCF. Depending on the cellular context, the MAPK/ERK cascade mediates diverse biological functions such as cell growth, adhesion, survival and differentiation through the regulation of transcription, translation, cytoskeletal rearrangements. The MAPK/ERK cascade also plays a role in initiation and regulation of meiosis, mitosis, and postmitotic functions in differentiated cells by phosphorylating a number of transcription factors. About 160 substrates have already been discovered for ERKs. Many of these substrates are localized in the nucleus, and seem to participate in the regulation of transcription upon stimulation. However, other substrates are found in the cytosol as well as in other cellular organelles, and those are responsible for processes such as translation, mitosis and apoptosis. Moreover, the MAPK/ERK cascade is also involved in the regulation of the endosomal dynamics, including lysosome processing and endosome cycling through the perinuclear recycling compartment (PNRC); as well as in the fragmentation of the Golgi apparatus during mitosis. The substrates include transcription factors (such as ATF2, BCL6, ELK1, ERF, FOS, HSF4 or SPZ1), cytoskeletal elements (such as CANX, CTTN, GJA1, MAP2, MAPT, PXN, SORBS3 or STMN1), regulators of apoptosis (such as BAD, BTG2, CASP9, DAPK1, IER3, MCL1 or PPARG), regulators of translation (such as EIF4EBP1 and FXR1) and a variety of other signaling-related molecules (like ARHGEF2, DCC, FRS2 or GRB10). Protein kinases (such as RAF1, RPS6KA1/RSK1, RPS6KA3/RSK2, RPS6KA2/RSK3, RPS6KA6/RSK4, SYK, MKNK1/MNK1, MKNK2/MNK2, RPS6KA5/MSK1, RPS6KA4/MSK2, MAPKAPK3 or MAPKAPK5) and phosphatases (such as DUSP1, DUSP4, DUSP6 or DUSP16) are other substrates which enable the propagation the MAPK/ERK signal to additional cytosolic and nuclear targets, thereby extending the specificity of the cascade. Mediates phosphorylation of TPR in response to EGF stimulation. May play a role in the spindle assembly checkpoint. Phosphorylates PML and promotes its interaction with PIN1, leading to PML degradation. Phosphorylates CDK2AP2. Phosphorylates phosphoglycerate kinase PGK1 under hypoxic conditions to promote its targeting to the mitochondrion and suppress the formation of acetyl-coenzyme A from pyruvate. Its function is as follows. Acts as a transcriptional repressor. Binds to a [GC]AAA[GC] consensus sequence. Repress the expression of interferon gamma-induced genes. Seems to bind to the promoter of CCL5, DMP1, IFIH1, IFITM1, IRF7, IRF9, LAMP3, OAS1, OAS2, OAS3 and STAT1. Transcriptional activity is independent of kinase activity. The chain is Mitogen-activated protein kinase 1 from Bos taurus (Bovine).